The primary structure comprises 635 residues: Glycosyltransferase-like protein gnt13 (635 aa).

Over 1–18 the chain is Cytoplasmic; it reads MNINTLIINFNKVKRMKN. The helical; Signal-anchor for type II membrane protein transmembrane segment at 19–38 threads the bilayer; the sequence is FLILTLLVVMVVVFLQGPTL. The Extracellular portion of the chain corresponds to 39–635; the sequence is MINNSGQGMG…PNECFSDHHW (597 aa). N-linked (GlcNAc...) asparagine glycans are attached at residues Asn41 and Asn179. 2 disordered regions span residues 300–358 and 389–458; these read NINN…NNID and NIDN…NNEP. Low complexity predominate over residues 389 to 456; that stretch reads NIDNNNSNYN…NNNNNNNNNN (68 aa). N-linked (GlcNAc...) asparagine glycosylation is found at Asn393 and Asn535.

It belongs to the glycosyltransferase 8 family. Highly divergent.

It is found in the membrane. In Dictyostelium discoideum (Social amoeba), this protein is Glycosyltransferase-like protein gnt13 (gnt13).